Reading from the N-terminus, the 201-residue chain is MVLFTLEDFAVFKATTLATRMHLIREQLDPKFAEAATVIVPLLQTDQQQAIYSHIAKHQRRYRNPPPNTWVAFSTSSRGYKMVPHLALGFWDDRLFLWLSVLRESKPASRVLTGITAMATTLPGKWQVAGEHTDKAMLPLTSANLATVGARFQTIKKAEFLLGKVYLADDPIWADPVRLWQDIQQRVVALKPMFDQLVQNV.

Belongs to the UPF0637 family.

The polypeptide is UPF0637 protein LSEI_1198 (Lacticaseibacillus paracasei (strain ATCC 334 / BCRC 17002 / CCUG 31169 / CIP 107868 / KCTC 3260 / NRRL B-441) (Lactobacillus paracasei)).